The chain runs to 237 residues: Uridylate kinase (237 aa).

ATP is bound at residue 11–14; it reads KLSG. A UMP-binding site is contributed by Gly-52. Positions 53 and 57 each coordinate ATP. UMP contacts are provided by residues Asp-72 and 134-141; that span reads TGYSYFTT. Asn-162, Tyr-168, and Asp-171 together coordinate ATP.

This sequence belongs to the UMP kinase family. In terms of assembly, homohexamer.

It is found in the cytoplasm. The catalysed reaction is UMP + ATP = UDP + ADP. The protein operates within pyrimidine metabolism; CTP biosynthesis via de novo pathway; UDP from UMP (UMPK route): step 1/1. Inhibited by UTP. Its function is as follows. Catalyzes the reversible phosphorylation of UMP to UDP. The protein is Uridylate kinase of Mycoplasma capricolum subsp. capricolum (strain California kid / ATCC 27343 / NCTC 10154).